A 1177-amino-acid polypeptide reads, in one-letter code: Transcription-repair-coupling factor (1177 aa).

The Helicase ATP-binding domain occupies 638–799 (DMERERPMDR…MLGVRDLSVI (162 aa)). 651–658 (GDVGYGKT) provides a ligand contact to ATP. A DEEQ box motif is present at residues 752-755 (DEEQ). The Helicase C-terminal domain maps to 820-974 (LVREAIEREL…GFKIAMRDLT (155 aa)).

In the N-terminal section; belongs to the UvrB family. The protein in the C-terminal section; belongs to the helicase family. RecG subfamily.

Its subcellular location is the cytoplasm. In terms of biological role, couples transcription and DNA repair by recognizing RNA polymerase (RNAP) stalled at DNA lesions. Mediates ATP-dependent release of RNAP and its truncated transcript from the DNA, and recruitment of nucleotide excision repair machinery to the damaged site. Probably required to repair non-bulky DNA lesions. The chain is Transcription-repair-coupling factor from Bacillus subtilis (strain 168).